A 220-amino-acid chain; its full sequence is Ribosomal RNA small subunit methyltransferase J (220 aa).

S-adenosyl-L-methionine-binding positions include arginine 55 to aspartate 56, glutamate 71 to arginine 72, and aspartate 123.

The protein belongs to the methyltransferase superfamily. RsmJ family.

It is found in the cytoplasm. The enzyme catalyses guanosine(1516) in 16S rRNA + S-adenosyl-L-methionine = N(2)-methylguanosine(1516) in 16S rRNA + S-adenosyl-L-homocysteine + H(+). Its function is as follows. Specifically methylates the guanosine in position 1516 of 16S rRNA. In Rhodopseudomonas palustris (strain BisB5), this protein is Ribosomal RNA small subunit methyltransferase J.